Reading from the N-terminus, the 338-residue chain is tRNA N6-adenosine threonylcarbamoyltransferase (338 aa).

Residues His111 and His115 each coordinate Fe cation. Residues 134 to 138 (LVSGG), Asp167, Gly180, and Asn272 contribute to the substrate site. Asp300 contacts Fe cation.

This sequence belongs to the KAE1 / TsaD family. The cofactor is Fe(2+).

It is found in the cytoplasm. The catalysed reaction is L-threonylcarbamoyladenylate + adenosine(37) in tRNA = N(6)-L-threonylcarbamoyladenosine(37) in tRNA + AMP + H(+). Its function is as follows. Required for the formation of a threonylcarbamoyl group on adenosine at position 37 (t(6)A37) in tRNAs that read codons beginning with adenine. Is involved in the transfer of the threonylcarbamoyl moiety of threonylcarbamoyl-AMP (TC-AMP) to the N6 group of A37, together with TsaE and TsaB. TsaD likely plays a direct catalytic role in this reaction. The chain is tRNA N6-adenosine threonylcarbamoyltransferase from Shewanella baltica (strain OS223).